The following is a 625-amino-acid chain: Tumor necrosis factor receptor superfamily member 11A (625 aa).

The N-terminal stretch at 1–30 (MAPRARRRRQLPAPLLALCVLLVPLQVTLQ) is a signal peptide. The Extracellular portion of the chain corresponds to 31-214 (VTPPCTQERH…PKEAQAYLPS (184 aa)). Cystine bridges form between cysteine 35/cysteine 47, cysteine 48/cysteine 61, cysteine 51/cysteine 69, cysteine 72/cysteine 87, cysteine 93/cysteine 113, cysteine 115/cysteine 128, cysteine 125/cysteine 127, cysteine 134/cysteine 152, and cysteine 155/cysteine 170. 4 TNFR-Cys repeats span residues 35–69 (CTQERHYEHLGRCCSRCEPGKYLSSKCTPTSDSVC), 72–113 (CGPD…PRRC), 115–152 (CTAGYHWNSDCECCRRNTECAPGFGAQHPLQLNKDTVC), and 155–195 (CLLG…DVVC). The N-linked (GlcNAc...) asparagine glycan is linked to asparagine 106. Na(+) is bound by residues cysteine 134, alanine 135, phenylalanine 138, serine 161, and valine 163. The N-linked (GlcNAc...) asparagine glycan is linked to asparagine 175. Cysteine 176 and cysteine 195 form a disulfide bridge. Residues 215–234 (LIVLLLFISVVVVAAIIFGV) form a helical membrane-spanning segment. Over 235-625 (YYRKGGKALT…HTQGSGQCAE (391 aa)) the chain is Cytoplasmic. 3 disordered regions span residues 331 to 356 (TQGDLSRKIPTEDEYTDRPSQPSTGS), 388 to 413 (GTESTVDSEGCDFTEPPSRTDSMPVS), and 479 to 524 (SMAE…FISS). The segment covering 499 to 511 (SGSSPSDQPPASG) has biased composition (low complexity). A compositionally biased stretch (polar residues) spans 512-524 (NVTGNSNSTFISS). The interval 532–537 (GDIIVV) is required for interaction with EEIG1 and osteoclast differentiation. The segment at 542-625 (TSQEGPGSAE…HTQGSGQCAE (84 aa)) is disordered. The segment covering 543-558 (SQEGPGSAEPESEPVG) has biased composition (low complexity). Positions 561-571 (VQEETLAHRDS) are enriched in basic and acidic residues. The residue at position 571 (serine 571) is a Phosphoserine. The span at 603-625 (RPVQEQGGAQTSLHTQGSGQCAE) shows a compositional bias: polar residues.

Binds to the clefts between the subunits of the TNFSF11 ligand trimer to form a heterohexamer. Part of a complex composed of EEIG1, TNFRSF11A/RANK, PLCG2, GAB2, TEC and BTK; complex formation increases in the presence of TNFSF11/RANKL. Interacts with TRAF1, TRAF2, TRAF3, TRAF5 and TRAF6. Interacts (via cytoplasmic domain) with GAB2. Interacts (via cytoplasmic domain); with EEIG1 (via N-terminus); when in the presence of TNFSF11/RANKL. Ubiquitous expression with high levels in trabecular bone, thymus, small intestine, lung, brain and kidney. Weakly expressed in spleen and bone marrow.

It is found in the cell membrane. Its subcellular location is the membrane raft. Receptor for TNFSF11/RANKL/TRANCE/OPGL; essential for RANKL-mediated osteoclastogenesis. Its interaction with EEIG1 promotes osteoclastogenesis via facilitating the transcription of NFATC1 and activation of PLCG2. Involved in the regulation of interactions between T-cells and dendritic cells. The chain is Tumor necrosis factor receptor superfamily member 11A (Tnfrsf11a) from Mus musculus (Mouse).